The chain runs to 272 residues: Transcription factor E2F6 (272 aa).

Positions 1–62 are binding to corepressors; that stretch reads MSQQRTARRQ…MRKALKVKRP (62 aa). Residues 50 to 129 mediate DNA binding; that stretch reads YVSMRKALKV…SKNHIRWIGS (80 aa). A DEF box motif is present at residues 95-129; it reads KLGVRKRRVYDITNVLDGIELVEKKSKNHIRWIGS. Residues 130–222 are dimerization; sequence DLNNFGAAPQ…PAPREDSITV (93 aa). The leucine-zipper stretch occupies residues 143–164; sequence LQAELSDLSAMEDALDELIKDC. The segment at 173 to 272 is transcription repression; the sequence is DDKENERLAY…CPEKEDEPPQ (100 aa). Positions 242 to 272 are disordered; sequence HSNGKTNDGIGASPSKSSHPQCPEKEDEPPQ.

The protein belongs to the E2F/DP family. As to quaternary structure, forms heterodimers with DP family members TFDP1 or TFDP2. Component of the DRTF1/E2F transcription factor complex. Part of the E2F6.com-1 complex in G0 phase composed of E2F6, MGA, MAX, TFDP1, CBX3, BAT8, EUHMTASE1, RING1, RNF2, MBLR, L3MBTL2 and YAF2. Component of some MLL1/MLL complex, at least composed of the core components KMT2A/MLL1, ASH2L, HCFC1/HCF1, WDR5 and RBBP5, as well as the facultative components BACC1, CHD8, E2F6, HSP70, INO80C, KANSL1, LAS1L, MAX, MCRS1, MGA, KAT8/MOF, PELP1, PHF20, PRP31, RING2, RUVB1/TIP49A, RUVB2/TIP49B, SENP3, TAF1, TAF4, TAF6, TAF7, TAF9 and TEX10.

The protein localises to the nucleus. Inhibitor of E2F-dependent transcription. Binds DNA cooperatively with DP proteins through the E2 recognition site, 5'-TTTC[CG]CGC-3'. Has a preference for the 5'-TTTCCCGC-3' E2F recognition site. E2F6 lacks the transcriptional activation and pocket protein binding domains. Appears to regulate a subset of E2F-dependent genes whose products are required for entry into the cell cycle but not for normal cell cycle progression. Represses expression of some meiosis-specific genes, including SLC25A31/ANT4. May silence expression via the recruitment of a chromatin remodeling complex containing histone H3-K9 methyltransferase activity. Overexpression delays the exit of cells from the S-phase. This chain is Transcription factor E2F6, found in Mus musculus (Mouse).